We begin with the raw amino-acid sequence, 165 residues long: Phosphopantetheine adenylyltransferase (165 aa).

T9 provides a ligand contact to substrate. ATP contacts are provided by residues T9–F10 and H17. Substrate-binding residues include K41, L73, and R87. ATP is bound by residues G88 to R90, E98, and Y123 to T129.

It belongs to the bacterial CoaD family. Homohexamer. It depends on Mg(2+) as a cofactor.

The protein resides in the cytoplasm. The catalysed reaction is (R)-4'-phosphopantetheine + ATP + H(+) = 3'-dephospho-CoA + diphosphate. Its pathway is cofactor biosynthesis; coenzyme A biosynthesis; CoA from (R)-pantothenate: step 4/5. Its function is as follows. Reversibly transfers an adenylyl group from ATP to 4'-phosphopantetheine, yielding dephospho-CoA (dPCoA) and pyrophosphate. The sequence is that of Phosphopantetheine adenylyltransferase from Burkholderia lata (strain ATCC 17760 / DSM 23089 / LMG 22485 / NCIMB 9086 / R18194 / 383).